The primary structure comprises 276 residues: Carboxysome assembly protein CcmO (276 aa).

BMC domains lie at 16–100 (ALGV…AVLP) and 120–204 (AIGL…DSLP). Disordered regions lie at residues 200–219 (MDSL…LQLP) and 252–276 (QSAL…RDDQ).

Belongs to the bacterial microcompartments protein family. Homooligomerizes, possibly as a trimer, interacts with CcmK2 in the carboxysome.

It is found in the carboxysome. Functionally, required for formation of the carboxysome, a polyhedral inclusion where RuBisCO (ribulose bisphosphate carboxylase, rbcL-rbcS) is sequestered. Required for recruitment of major shell protein CcmK2 to the pre-carboxysome. Suggested to be a carboxysome shell protein, but it is not detected in gels, mass spectrometry or by protein sequencing. Its function is as follows. Beta-carboxysome assembly initiates when soluble RuBisCO is condensed into a liquid matrix in a pre-carboxysome by the RbcS-like domains of probably both CcmM58 and CcmM35. CcmN interacts with the N-terminus of CcmM58, and then recruits the CcmK2 major shell protein via CcmN's encapsulation peptide. Shell formation requires CcmK proteins and CcmO. CcmL caps the otherwise elongated carboxysome. Once fully encapsulated carboxysomes are formed, they migrate within the cell probably via interactions with the cytoskeleton. The chain is Carboxysome assembly protein CcmO from Synechococcus elongatus (strain ATCC 33912 / PCC 7942 / FACHB-805) (Anacystis nidulans R2).